The following is a 287-amino-acid chain: Probable ketose 3-epimerase (287 aa).

E152 functions as the Proton donor/acceptor in the catalytic mechanism. Mn(2+) contacts are provided by E152 and D185. A substrate-binding site is contributed by H188. H211 lines the Mn(2+) pocket. Position 217 (R217) interacts with substrate. E246 functions as the Proton donor/acceptor in the catalytic mechanism. E246 contacts Mn(2+).

It belongs to the hyi family. It depends on Mn(2+) as a cofactor.

Functionally, probably catalyzes the epimerization of ketopentoses and/or ketohexoses at the C3 position. This is Probable ketose 3-epimerase from Synechocystis sp. (strain ATCC 27184 / PCC 6803 / Kazusa).